A 259-amino-acid polypeptide reads, in one-letter code: Proteasome subunit alpha (259 aa).

The protein belongs to the peptidase T1A family. As to quaternary structure, the 20S proteasome core is composed of 14 alpha and 14 beta subunits that assemble into four stacked heptameric rings, resulting in a barrel-shaped structure. The two inner rings, each composed of seven catalytic beta subunits, are sandwiched by two outer rings, each composed of seven alpha subunits. The catalytic chamber with the active sites is on the inside of the barrel. Has a gated structure, the ends of the cylinder being occluded by the N-termini of the alpha-subunits. Is capped at one or both ends by the proteasome regulatory ATPase, PAN.

The protein resides in the cytoplasm. With respect to regulation, the formation of the proteasomal ATPase PAN-20S proteasome complex, via the docking of the C-termini of PAN into the intersubunit pockets in the alpha-rings, triggers opening of the gate for substrate entry. Interconversion between the open-gate and close-gate conformations leads to a dynamic regulation of the 20S proteasome proteolysis activity. In terms of biological role, component of the proteasome core, a large protease complex with broad specificity involved in protein degradation. The polypeptide is Proteasome subunit alpha (Methanococcus maripaludis (strain C6 / ATCC BAA-1332)).